A 548-amino-acid chain; its full sequence is Fumarate hydratase class I, anaerobic (548 aa).

C105 is a binding site for [4Fe-4S] cluster. Position 192 is an N6-acetyllysine (K192). Residues C224 and C318 each coordinate [4Fe-4S] cluster.

Belongs to the class-I fumarase family. In terms of assembly, homodimer. It depends on [4Fe-4S] cluster as a cofactor.

The catalysed reaction is (S)-malate = fumarate + H2O. It catalyses the reaction (S,S)-tartrate = oxaloacetate + H2O. Its function is as follows. Catalyzes the reversible hydration of fumarate to (S)-malate. Functions in the generation of fumarate for use as an anaerobic electron acceptor. To a lesser extent, also displays D-tartrate dehydratase activity, but is not able to convert (R)-malate, L-tartrate or meso-tartrate. Is required for anaerobic growth on D-tartrate. The polypeptide is Fumarate hydratase class I, anaerobic (Escherichia coli (strain K12)).